The sequence spans 131 residues: Fatty acid-binding protein (131 aa).

Residues arginine 106 and 126 to 128 each bind (5Z,8Z,11Z,14Z)-eicosatetraenoate; that span reads RPY. (9Z)-octadecenoate is bound by residues arginine 106 and 126-128; that span reads RPY.

It belongs to the calycin superfamily. Fatty-acid binding protein (FABP) family.

The protein localises to the cytoplasm. Its function is as follows. FABPs are thought to play a role in the intracellular transport of long-chain fatty acids and their acyl-CoA esters. This chain is Fatty acid-binding protein, found in Lepidoglyphus destructor (Storage mite).